Consider the following 284-residue polypeptide: tRNA uridine(34) hydroxylase (284 aa).

Residues 132 to 226 (TGRPVVMLDT…YFEEVGGAHY (95 aa)) enclose the Rhodanese domain. Cys-186 functions as the Cysteine persulfide intermediate in the catalytic mechanism.

It belongs to the TrhO family.

It carries out the reaction uridine(34) in tRNA + AH2 + O2 = 5-hydroxyuridine(34) in tRNA + A + H2O. Catalyzes oxygen-dependent 5-hydroxyuridine (ho5U) modification at position 34 in tRNAs. This Burkholderia lata (strain ATCC 17760 / DSM 23089 / LMG 22485 / NCIMB 9086 / R18194 / 383) protein is tRNA uridine(34) hydroxylase.